Consider the following 186-residue polypeptide: Nicotinamide-nucleotide adenylyltransferase (186 aa).

Belongs to the archaeal NMN adenylyltransferase family.

Its subcellular location is the cytoplasm. It carries out the reaction beta-nicotinamide D-ribonucleotide + ATP + H(+) = diphosphate + NAD(+). It participates in cofactor biosynthesis; NAD(+) biosynthesis; NAD(+) from nicotinamide D-ribonucleotide: step 1/1. This Pyrococcus horikoshii (strain ATCC 700860 / DSM 12428 / JCM 9974 / NBRC 100139 / OT-3) protein is Nicotinamide-nucleotide adenylyltransferase.